The sequence spans 228 residues: Thermonuclease (228 aa).

An N-terminal signal peptide occupies residues 1–23 (MTEYLLSAGICMAIVSILLIGMA). A propeptide spanning residues 24–60 (ISNVSKGQYAKRFFFFATSCLVLTLVVVSSLSSSANA) is cleaved from the precursor. Asp-100 serves as a coordination point for Ca(2+). Residue Arg-114 is part of the active site. Positions 119 and 120 each coordinate Ca(2+). Active-site residues include Glu-122 and Arg-166.

It belongs to the thermonuclease family. Requires Ca(2+) as cofactor.

It is found in the secreted. It carries out the reaction Endonucleolytic cleavage to nucleoside 3'-phosphates and 3'-phosphooligonucleotide end-products.. Enzyme that catalyzes the hydrolysis of both DNA and RNA at the 5' position of the phosphodiester bond. The polypeptide is Thermonuclease (nuc) (Staphylococcus aureus (strain MSSA476)).